Reading from the N-terminus, the 344-residue chain is MTSLSWQQTLSAMDVDDIVSLLAAAERADGTGPVSEDVRLALRPGLRIGAGRHLLAVSAAADTSGPNVPDTPGDQNAADTSTMPGRVPAGRIIGYAHLGGVDQARQAEVVVHPDHRGRGVGTALVGGLTEALAAPSSRLDIWAHGDLPAAAALATRLTFTRTRVLLQLRRPLAAGTPLPDPRLPAGVTVRTFVPDQDDRAWLAVNAAAFADHPEQGRWTLDDLARRRAEPWFDPRGFFLAEHDGALVGFHWTKVHETDQTPPRNAQPGPIGEVYVVGVLPGAGGAGLGRALTLIGLRHLQAEGLDSVLLYVDEDNVRAVRMYTGLGFITYVRDVSYHWERPSTG.

Glu36 contacts 1D-myo-inositol 2-(L-cysteinylamino)-2-deoxy-alpha-D-glucopyranoside. 2 consecutive N-acetyltransferase domains span residues 40-179 and 187-344; these read LALR…TPLP and VTVR…PSTG. A disordered region spans residues 61-83; it reads ADTSGPNVPDTPGDQNAADTSTM. Residues 73–83 are compositionally biased toward polar residues; the sequence is GDQNAADTSTM. 109-111 lines the acetyl-CoA pocket; that stretch reads VVV. The 1D-myo-inositol 2-(L-cysteinylamino)-2-deoxy-alpha-D-glucopyranoside site is built by Glu214, Lys253, and Glu272. Acetyl-CoA is bound by residues 276-278 and 283-289; these read VGV and GGAGLGR. Tyr310 is a 1D-myo-inositol 2-(L-cysteinylamino)-2-deoxy-alpha-D-glucopyranoside binding site. Acetyl-CoA is bound at residue 315–320; that stretch reads NVRAVR.

It belongs to the acetyltransferase family. MshD subfamily. In terms of assembly, monomer.

The catalysed reaction is 1D-myo-inositol 2-(L-cysteinylamino)-2-deoxy-alpha-D-glucopyranoside + acetyl-CoA = mycothiol + CoA + H(+). Catalyzes the transfer of acetyl from acetyl-CoA to desacetylmycothiol (Cys-GlcN-Ins) to form mycothiol. In Frankia casuarinae (strain DSM 45818 / CECT 9043 / HFP020203 / CcI3), this protein is Mycothiol acetyltransferase.